We begin with the raw amino-acid sequence, 235 residues long: 2,3,4,5-tetrahydropyridine-2,6-dicarboxylate N-acetyltransferase (235 aa).

The protein belongs to the transferase hexapeptide repeat family. DapH subfamily.

It catalyses the reaction (S)-2,3,4,5-tetrahydrodipicolinate + acetyl-CoA + H2O = L-2-acetamido-6-oxoheptanedioate + CoA. It functions in the pathway amino-acid biosynthesis; L-lysine biosynthesis via DAP pathway; LL-2,6-diaminopimelate from (S)-tetrahydrodipicolinate (acetylase route): step 1/3. Catalyzes the transfer of an acetyl group from acetyl-CoA to tetrahydrodipicolinate. The polypeptide is 2,3,4,5-tetrahydropyridine-2,6-dicarboxylate N-acetyltransferase (Anoxybacillus flavithermus (strain DSM 21510 / WK1)).